A 98-amino-acid polypeptide reads, in one-letter code: Small ribosomal subunit protein bS18c (98 aa).

Positions Met1 to Pro13 are enriched in basic and acidic residues. Positions Met1 to Lys26 are disordered.

It belongs to the bacterial ribosomal protein bS18 family. In terms of assembly, part of the 30S ribosomal subunit.

The protein localises to the plastid. It is found in the chloroplast. The protein is Small ribosomal subunit protein bS18c of Gnetum parvifolium (Small-leaved jointfir).